We begin with the raw amino-acid sequence, 248 residues long: Pyridoxine 5'-phosphate synthase (248 aa).

N12 contacts 3-amino-2-oxopropyl phosphate. 14–15 (DH) is a 1-deoxy-D-xylulose 5-phosphate binding site. Residue R23 participates in 3-amino-2-oxopropyl phosphate binding. H48 functions as the Proton acceptor in the catalytic mechanism. 1-deoxy-D-xylulose 5-phosphate contacts are provided by R50 and H55. The Proton acceptor role is filled by E75. T105 is a 1-deoxy-D-xylulose 5-phosphate binding site. H196 acts as the Proton donor in catalysis. 3-amino-2-oxopropyl phosphate-binding positions include G197 and 218-219 (GH).

The protein belongs to the PNP synthase family. In terms of assembly, homooctamer; tetramer of dimers.

It is found in the cytoplasm. It carries out the reaction 3-amino-2-oxopropyl phosphate + 1-deoxy-D-xylulose 5-phosphate = pyridoxine 5'-phosphate + phosphate + 2 H2O + H(+). Its pathway is cofactor biosynthesis; pyridoxine 5'-phosphate biosynthesis; pyridoxine 5'-phosphate from D-erythrose 4-phosphate: step 5/5. Functionally, catalyzes the complicated ring closure reaction between the two acyclic compounds 1-deoxy-D-xylulose-5-phosphate (DXP) and 3-amino-2-oxopropyl phosphate (1-amino-acetone-3-phosphate or AAP) to form pyridoxine 5'-phosphate (PNP) and inorganic phosphate. This is Pyridoxine 5'-phosphate synthase from Pseudomonas aeruginosa (strain LESB58).